Consider the following 215-residue polypeptide: MSKVYDWFEERLEIQAIAEDVSSKYVPPHVNIFYCLGGITLTCFLIQFATGFAMTFYYKPTVAEAYSSVQFIMNQVNFGWLIRSIHRWSASMMVLMMILHVFRVYLTGGFKRPRELTWVTGVVMAVITVTFGVTGYSLPWDQVGYWAVKIVSGVPEAIPVVGSAMVELLRGGQSVGQATLTRFYSLHTFVLPWLIAVFMLLHFLMIRKQGISGPL.

Residues 32–52 (IFYCLGGITLTCFLIQFATGF) traverse the membrane as a helical segment. Residue Cys-35 coordinates heme c. Residues His-86 and His-100 each contribute to the heme b site. Transmembrane regions (helical) follow at residues 90-110 (ASMM…TGGF), 116-136 (LTWV…VTGY), and 186-206 (LHTF…FLMI). Heme b is bound by residues His-187 and His-202.

This sequence belongs to the cytochrome b family. PetB subfamily. As to quaternary structure, the 4 large subunits of the cytochrome b6-f complex are cytochrome b6, subunit IV (17 kDa polypeptide, PetD), cytochrome f and the Rieske protein, while the 4 small subunits are PetG, PetL, PetM and PetN. The complex functions as a dimer. Heme b serves as cofactor. It depends on heme c as a cofactor.

Its subcellular location is the cellular thylakoid membrane. Component of the cytochrome b6-f complex, which mediates electron transfer between photosystem II (PSII) and photosystem I (PSI), cyclic electron flow around PSI, and state transitions. The protein is Cytochrome b6 of Synechococcus elongatus (strain ATCC 33912 / PCC 7942 / FACHB-805) (Anacystis nidulans R2).